The chain runs to 305 residues: UDP-N-acetylenolpyruvoylglucosamine reductase (305 aa).

The FAD-binding PCMH-type domain maps to Val-35 to His-214. Arg-179 is a catalytic residue. The active-site Proton donor is Ser-228. Glu-298 is a catalytic residue.

This sequence belongs to the MurB family. The cofactor is FAD.

The protein localises to the cytoplasm. The enzyme catalyses UDP-N-acetyl-alpha-D-muramate + NADP(+) = UDP-N-acetyl-3-O-(1-carboxyvinyl)-alpha-D-glucosamine + NADPH + H(+). It functions in the pathway cell wall biogenesis; peptidoglycan biosynthesis. Cell wall formation. This Nitrobacter winogradskyi (strain ATCC 25391 / DSM 10237 / CIP 104748 / NCIMB 11846 / Nb-255) protein is UDP-N-acetylenolpyruvoylglucosamine reductase.